Reading from the N-terminus, the 29-residue chain is Chassatide C10 (29 aa).

The cyclopeptide (Gly-Asn) cross-link spans 1–29 (GEYCGESCYLIPCFTPGCYCVSRQCVNKN). Cystine bridges form between cysteine 4-cysteine 18, cysteine 8-cysteine 20, and cysteine 13-cysteine 25.

In terms of processing, this is a cyclic peptide.

Functionally, probably participates in a plant defense mechanism. Has no activity against bacteria up to a concentration of 80 uM. Has cytotoxic but no hemolytic activity. The sequence is that of Chassatide C10 from Chassalia chartacea (Chassalia curviflora).